A 117-amino-acid chain; its full sequence is Hainantoxin-XV-4 (117 aa).

The first 20 residues, 1–20 (MKLCAVIIASLLVCVAVASS), serve as a signal peptide directing secretion. The segment at 20 to 55 (SSDNQKEFAQEKEMTREETQSLGEHEKDDEVTGSEE) is disordered. The propeptide occupies 21–56 (SDNQKEFAQEKEMTREETQSLGEHEKDDEVTGSEER). A compositionally biased stretch (basic and acidic residues) spans 23 to 55 (NQKEFAQEKEMTREETQSLGEHEKDDEVTGSEE). Disulfide bonds link cysteine 58–cysteine 72, cysteine 65–cysteine 78, cysteine 69–cysteine 115, and cysteine 71–cysteine 91.

Belongs to the neurotoxin 03 (Tx2) family. 02 subfamily. HNTX-XV sub-subfamily. Expressed by the venom gland.

It localises to the secreted. Putative ion channel inhibitor. This Cyriopagopus hainanus (Chinese bird spider) protein is Hainantoxin-XV-4.